Consider the following 362-residue polypeptide: Heat-inducible transcription repressor HrcA (362 aa).

The protein belongs to the HrcA family.

Functionally, negative regulator of class I heat shock genes (grpE-dnaK-dnaJ and groELS operons). Prevents heat-shock induction of these operons. This chain is Heat-inducible transcription repressor HrcA, found in Rhizobium leguminosarum bv. trifolii (strain WSM2304).